The sequence spans 231 residues: MMEKNTMLFSLKDVGKEYQGPAEKIIIFSRLNLDIAQGDSVAVVGASGSGKSTLLHLLGTLDNPSRGTVLFRGRDITAMTAEQKAAMRSRDVGFVFQFHHLLPEFNTQENVAMQAVIAGMPRREAMKKAAHALELVGMSGRAGHRVGTLSGGERQRAAIARAILMHPAVLLADEPTGNLDERTGDSVGQLLMDLNRELGMTLVVVTHNNSLASLMNRRLELRAGELYDQNC.

Positions 9–230 (FSLKDVGKEY…LRAGELYDQN (222 aa)) constitute an ABC transporter domain. 45-52 (GASGSGKS) lines the ATP pocket.

The protein belongs to the ABC transporter superfamily. Lipoprotein translocase (TC 3.A.1.125) family. The complex is composed of two ATP-binding proteins (LolD) and two transmembrane proteins (LolC and LolE).

The protein resides in the cell inner membrane. Functionally, part of the ABC transporter complex LolCDE involved in the translocation of mature outer membrane-directed lipoproteins, from the inner membrane to the periplasmic chaperone, LolA. Responsible for the formation of the LolA-lipoprotein complex in an ATP-dependent manner. This chain is Lipoprotein-releasing system ATP-binding protein LolD, found in Oleidesulfovibrio alaskensis (strain ATCC BAA-1058 / DSM 17464 / G20) (Desulfovibrio alaskensis).